We begin with the raw amino-acid sequence, 27 residues long: Defensin-like protein 2 (27 aa).

Gln-1 carries the post-translational modification Pyrrolidone carboxylic acid.

This sequence belongs to the DEFL family. As to quaternary structure, forms oligomers in its native state.

Functionally, possesses some antifungal activity sensitive to inorganic cations and antibacterial activity against B.megaterium. The polypeptide is Defensin-like protein 2 (Brassica campestris (Field mustard)).